Here is an 897-residue protein sequence, read N- to C-terminus: Chromodomain-helicase-DNA-binding protein 1-like (897 aa).

An Omega-N-methylarginine modification is found at Arg-9. The Helicase ATP-binding domain occupies 58-223 (AQRFHCQNGC…YSLLSFVEPD (166 aa)). 71–78 (DEMGLGKT) is a binding site for ATP. Residues 174–177 (DEAH) carry the DEAH box motif. A Helicase C-terminal domain is found at 351 to 513 (LLDKLLAFLY…QKPAADADLQ (163 aa)). A phosphoserine mark is found at Ser-540, Ser-607, Ser-618, Ser-628, and Ser-636. A regulatory linker segment (RLS) region spans residues 601 to 635 (TLLEKASQEGRSLRNKGSVLIPGLVEGSTKRKRVL). The required for ATPase activity stretch occupies residues 615-673 (NKGSVLIPGLVEGSTKRKRVLSPEELEDRQKKRQEAAAKRRRLIEEKKRQKEEAEHKKK). 2 disordered regions span residues 628 to 654 (STKR…AAKR) and 687 to 711 (LPSE…DYQD). Positions 638-675 (EELEDRQKKRQEAAAKRRRLIEEKKRQKEEAEHKKKMA) form a coiled coil. A compositionally biased stretch (basic and acidic residues) spans 642-654 (DRQKKRQEAAAKR). Residues 690-711 (EESEPEDLENGEESSAELDYQD) are compositionally biased toward acidic residues. The Macro domain occupies 704-897 (SAELDYQDPD…SSSSSRQLVP (194 aa)). Ser-891 bears the Phosphoserine mark.

It belongs to the SNF2/RAD54 helicase family. Interacts with nucleosomes; interacts with the acidic patch of histones. Interacts (via macro domain) with PARP1; interacts only when PARP1 is poly-ADP-ribosylated (PARylated). Interacts with CIAO1. In terms of tissue distribution, frequently overexpressed in hepatomacellular carcinomas.

The protein localises to the nucleus. It localises to the chromosome. It carries out the reaction ATP + H2O = ADP + phosphate + H(+). Adopts an inactive conformation in absence of DNA damage. Binding to poly-ADP-ribosylated histones activates the ATP-dependent chromatin remodeler activity. In terms of biological role, ATP-dependent chromatin remodeler that mediates chromatin-remodeling following DNA damage. Recruited to DNA damage sites through interaction with poly-ADP-ribose: specifically recognizes and binds histones that are poly-ADP-ribosylated on serine residues in response to DNA damage. Poly-ADP-ribose-binding activates the ATP-dependent chromatin remodeler activity, thereby regulating chromatin during DNA repair. Catalyzes nucleosome sliding away from DNA breaks in an ATP-dependent manner. Chromatin remodeling activity promotes PARP2 removal from chromatin. The sequence is that of Chromodomain-helicase-DNA-binding protein 1-like from Homo sapiens (Human).